Consider the following 235-residue polypeptide: Octanoyltransferase (235 aa).

In terms of domain architecture, BPL/LPL catalytic spans 44–231; the sequence is DTTADELWLV…HQVGLPNENN (188 aa). Residues 83-90, 150-152, and 163-165 contribute to the substrate site; these read RGGQVTYH, SLG, and GLA. The Acyl-thioester intermediate role is filled by C181.

This sequence belongs to the LipB family.

It is found in the cytoplasm. The catalysed reaction is octanoyl-[ACP] + L-lysyl-[protein] = N(6)-octanoyl-L-lysyl-[protein] + holo-[ACP] + H(+). It functions in the pathway protein modification; protein lipoylation via endogenous pathway; protein N(6)-(lipoyl)lysine from octanoyl-[acyl-carrier-protein]: step 1/2. In terms of biological role, catalyzes the transfer of endogenously produced octanoic acid from octanoyl-acyl-carrier-protein onto the lipoyl domains of lipoate-dependent enzymes. Lipoyl-ACP can also act as a substrate although octanoyl-ACP is likely to be the physiological substrate. This chain is Octanoyltransferase, found in Colwellia psychrerythraea (strain 34H / ATCC BAA-681) (Vibrio psychroerythus).